A 234-amino-acid polypeptide reads, in one-letter code: Leucyl/phenylalanyl-tRNA--protein transferase (234 aa).

The protein belongs to the L/F-transferase family.

The protein localises to the cytoplasm. The enzyme catalyses N-terminal L-lysyl-[protein] + L-leucyl-tRNA(Leu) = N-terminal L-leucyl-L-lysyl-[protein] + tRNA(Leu) + H(+). It catalyses the reaction N-terminal L-arginyl-[protein] + L-leucyl-tRNA(Leu) = N-terminal L-leucyl-L-arginyl-[protein] + tRNA(Leu) + H(+). The catalysed reaction is L-phenylalanyl-tRNA(Phe) + an N-terminal L-alpha-aminoacyl-[protein] = an N-terminal L-phenylalanyl-L-alpha-aminoacyl-[protein] + tRNA(Phe). In terms of biological role, functions in the N-end rule pathway of protein degradation where it conjugates Leu, Phe and, less efficiently, Met from aminoacyl-tRNAs to the N-termini of proteins containing an N-terminal arginine or lysine. The chain is Leucyl/phenylalanyl-tRNA--protein transferase from Syntrophobacter fumaroxidans (strain DSM 10017 / MPOB).